We begin with the raw amino-acid sequence, 431 residues long: Serine hydroxymethyltransferase 3 (431 aa).

(6S)-5,6,7,8-tetrahydrofolate is bound by residues L131 and 135-137 (GHL). K240 is subject to N6-(pyridoxal phosphate)lysine.

The protein belongs to the SHMT family. As to quaternary structure, homodimer. Pyridoxal 5'-phosphate serves as cofactor.

It localises to the cytoplasm. It carries out the reaction (6R)-5,10-methylene-5,6,7,8-tetrahydrofolate + glycine + H2O = (6S)-5,6,7,8-tetrahydrofolate + L-serine. It participates in one-carbon metabolism; tetrahydrofolate interconversion. Its pathway is amino-acid biosynthesis; glycine biosynthesis; glycine from L-serine: step 1/1. Functionally, catalyzes the reversible interconversion of serine and glycine with tetrahydrofolate (THF) serving as the one-carbon carrier. This reaction serves as the major source of one-carbon groups required for the biosynthesis of purines, thymidylate, methionine, and other important biomolecules. Also exhibits THF-independent aldolase activity toward beta-hydroxyamino acids, producing glycine and aldehydes, via a retro-aldol mechanism. This Colwellia psychrerythraea (strain 34H / ATCC BAA-681) (Vibrio psychroerythus) protein is Serine hydroxymethyltransferase 3.